We begin with the raw amino-acid sequence, 203 residues long: Large ribosomal subunit protein uL22 (203 aa).

2 stretches are compositionally biased toward polar residues: residues Q116–Y126 and V134–L167. The tract at residues Q116 to K203 is disordered. Low complexity predominate over residues S168 to T194.

It belongs to the universal ribosomal protein uL22 family. In terms of assembly, part of the 50S ribosomal subunit.

Its function is as follows. This protein binds specifically to 23S rRNA; its binding is stimulated by other ribosomal proteins, e.g. L4, L17, and L20. It is important during the early stages of 50S assembly. It makes multiple contacts with different domains of the 23S rRNA in the assembled 50S subunit and ribosome. In terms of biological role, the globular domain of the protein is located near the polypeptide exit tunnel on the outside of the subunit, while an extended beta-hairpin is found that lines the wall of the exit tunnel in the center of the 70S ribosome. The sequence is that of Large ribosomal subunit protein uL22 from Mesomycoplasma hyopneumoniae (strain 232) (Mycoplasma hyopneumoniae).